The chain runs to 210 residues: Small ribosomal subunit protein uS4 (210 aa).

The S4 RNA-binding domain maps to 100 to 160 (GRLDNVVYRM…EKSKNQLRVK (61 aa)).

Belongs to the universal ribosomal protein uS4 family. Part of the 30S ribosomal subunit. Contacts protein S5. The interaction surface between S4 and S5 is involved in control of translational fidelity.

Its function is as follows. One of the primary rRNA binding proteins, it binds directly to 16S rRNA where it nucleates assembly of the body of the 30S subunit. Functionally, with S5 and S12 plays an important role in translational accuracy. This is Small ribosomal subunit protein uS4 from Alcanivorax borkumensis (strain ATCC 700651 / DSM 11573 / NCIMB 13689 / SK2).